The chain runs to 860 residues: DNA mismatch repair protein MutS (860 aa).

618-625 (GPNMGGKS) lines the ATP pocket.

Belongs to the DNA mismatch repair MutS family.

In terms of biological role, this protein is involved in the repair of mismatches in DNA. It is possible that it carries out the mismatch recognition step. This protein has a weak ATPase activity. The polypeptide is DNA mismatch repair protein MutS (Hahella chejuensis (strain KCTC 2396)).